The sequence spans 321 residues: MVKSVSLLRSQSYEAGSLLASLRTLLEPLGGMGNFVKPGDRVLLKPNLLTGNRPGRECITRPEVVAAVAQLVQEAGGKPFMGDSPAFGSARGVAENNGYLPLLQALDIPIVEFRGGRYATDSDSFNHLRLSKEAMDADVVINLPKLKSHAQLTMTMGVKNLFGCVPGKMKAWWHMEAGKDANRFGEMLVETAKAIAPDLSILDGIMAHEGNGPMHGDPREVGLLAASPDVFALDFVITDILQLDPATIPTMAAQERLGLNPTAAELTFPLSHPRELVVDNWKLPEVLMPIDFGLPRVLRSTFKHFYIRFVKEPLHIYTGKA.

The protein localises to the cellular thylakoid membrane. The protein is Thylakoid-associated protein sll1697 of Synechocystis sp. (strain ATCC 27184 / PCC 6803 / Kazusa).